The chain runs to 148 residues: Small ribosomal subunit protein bS16 (148 aa).

The tract at residues 106 to 148 is disordered; sequence QAAARAAAGAEDRPATTPKKAKKSGSAEEAEAAPATDAPAAGQ. Residues 137 to 148 are compositionally biased toward low complexity; it reads AAPATDAPAAGQ.

This sequence belongs to the bacterial ribosomal protein bS16 family.

In Frankia casuarinae (strain DSM 45818 / CECT 9043 / HFP020203 / CcI3), this protein is Small ribosomal subunit protein bS16.